The primary structure comprises 234 residues: Phosphoribosylaminoimidazole-succinocarboxamide synthase (234 aa).

It belongs to the SAICAR synthetase family.

It carries out the reaction 5-amino-1-(5-phospho-D-ribosyl)imidazole-4-carboxylate + L-aspartate + ATP = (2S)-2-[5-amino-1-(5-phospho-beta-D-ribosyl)imidazole-4-carboxamido]succinate + ADP + phosphate + 2 H(+). The protein operates within purine metabolism; IMP biosynthesis via de novo pathway; 5-amino-1-(5-phospho-D-ribosyl)imidazole-4-carboxamide from 5-amino-1-(5-phospho-D-ribosyl)imidazole-4-carboxylate: step 1/2. The sequence is that of Phosphoribosylaminoimidazole-succinocarboxamide synthase from Streptococcus pyogenes serotype M1.